We begin with the raw amino-acid sequence, 328 residues long: Malate dehydrogenase (328 aa).

Residue 16–22 participates in NAD(+) binding; it reads GAAGQIS. R97 and R103 together coordinate substrate. Residues N110, Q117, and 134-136 each bind NAD(+); that span reads VGN. 2 residues coordinate substrate: N136 and R167. H192 serves as the catalytic Proton acceptor.

This sequence belongs to the LDH/MDH superfamily. MDH type 2 family.

The enzyme catalyses (S)-malate + NAD(+) = oxaloacetate + NADH + H(+). Functionally, catalyzes the reversible oxidation of malate to oxaloacetate. The protein is Malate dehydrogenase of Corynebacterium glutamicum (strain R).